Here is a 367-residue protein sequence, read N- to C-terminus: Glutamate 5-kinase (367 aa).

Lysine 9 serves as a coordination point for ATP. Positions 49, 136, and 148 each coordinate substrate. ATP-binding positions include 168 to 169 and 210 to 216; these read TD and TGGMKSK. The PUA domain occupies 276–350; that stretch reads SGQIEVDAGA…GMQSQDIQVR (75 aa).

Belongs to the glutamate 5-kinase family.

It localises to the cytoplasm. The enzyme catalyses L-glutamate + ATP = L-glutamyl 5-phosphate + ADP. It participates in amino-acid biosynthesis; L-proline biosynthesis; L-glutamate 5-semialdehyde from L-glutamate: step 1/2. Its function is as follows. Catalyzes the transfer of a phosphate group to glutamate to form L-glutamate 5-phosphate. The sequence is that of Glutamate 5-kinase from Bacillus cereus (strain G9842).